Reading from the N-terminus, the 196-residue chain is Aequorin-2 (196 aa).

The propeptide occupies 1–7 (MTSKQYS). 4 EF-hand domains span residues 18 to 53 (RWIGRHKHMFNFLDVNHNGKISLDEMVYKASDIVIN), 54 to 108 (NLGA…AKNE), 117 to 146 (DALFDIVDKDQNGAITLDEWKAYTKAAGII), and 147 to 182 (QSSEDCEETFRVCDIDESGQLDVDEMTRQHLGFWYT). Ca(2+) contacts are provided by D31, N33, N35, K37, and E42. 3 may interact with the chromophore regions span residues 47 to 57 (ASDIVINNLGA), 62 to 72 (AKRHKDAVEAF), and 107 to 117 (NEPTLIRIWGD). Ca(2+)-binding residues include D124, D126, N128, E135, D160, D162, S164, Q166, and E171.

This sequence belongs to the aequorin family. In terms of processing, the reduction of the disulfide bond is necessary to regenerate aequorin from apoaequorin.

Its function is as follows. Ca(2+)-dependent bioluminescence photoprotein. Displays an emission peak at 470 nm (blue light). Trace amounts of calcium ion trigger the intramolecular oxidation of the chromophore, coelenterazine into coelenteramide and CO(2) with the concomitant emission of light. The chain is Aequorin-2 from Aequorea victoria (Water jellyfish).